Reading from the N-terminus, the 622-residue chain is UvrABC system protein C (622 aa).

Residues 13–92 (DKPGVYLMKN…IKENRPKYNV (80 aa)) enclose the GIY-YIG domain. The 36-residue stretch at 205–240 (DELIKKIEEKMKRAAEKMDFEGAAHYRDQRQALLDI) folds into the UVR domain.

It belongs to the UvrC family. In terms of assembly, interacts with UvrB in an incision complex.

It is found in the cytoplasm. The UvrABC repair system catalyzes the recognition and processing of DNA lesions. UvrC both incises the 5' and 3' sides of the lesion. The N-terminal half is responsible for the 3' incision and the C-terminal half is responsible for the 5' incision. The polypeptide is UvrABC system protein C (Alkaliphilus metalliredigens (strain QYMF)).